The sequence spans 162 residues: MHYITPDLCDAYPELVQVVEPMLSNFGGRDSFGGQIVTLKCFEDNSLVKEQVELDGKGKVLVVDGGGSLRCALLGDMLAEKAAKHGWEGLVIYGCVRDVDMLAQTDLGVQALASYPKRSEKRGVGQLDLPVTFGGVTFRPGEYLYADNNGVIISPSPLTMPE.

Substrate contacts are provided by residues 75–78 and arginine 97; that span reads GDML. Position 98 (aspartate 98) interacts with a divalent metal cation.

Belongs to the class II aldolase/RraA-like family. As to quaternary structure, homotrimer. A divalent metal cation is required as a cofactor.

The enzyme catalyses 4-hydroxy-4-methyl-2-oxoglutarate = 2 pyruvate. It carries out the reaction oxaloacetate + H(+) = pyruvate + CO2. Functionally, catalyzes the aldol cleavage of 4-hydroxy-4-methyl-2-oxoglutarate (HMG) into 2 molecules of pyruvate. Also contains a secondary oxaloacetate (OAA) decarboxylase activity due to the common pyruvate enolate transition state formed following C-C bond cleavage in the retro-aldol and decarboxylation reactions. The polypeptide is Putative 4-hydroxy-4-methyl-2-oxoglutarate aldolase (Pseudomonas syringae pv. tomato (strain ATCC BAA-871 / DC3000)).